A 329-amino-acid chain; its full sequence is Ribonucleoside-diphosphate reductase subunit beta (329 aa).

Fe cation is bound by residues D66, E97, and H101. Residue Y105 is part of the active site. The Fe cation site is built by E164, E198, and H201.

It belongs to the ribonucleoside diphosphate reductase small chain family. As to quaternary structure, tetramer of two alpha and two beta subunits. It depends on Fe cation as a cofactor.

It catalyses the reaction a 2'-deoxyribonucleoside 5'-diphosphate + [thioredoxin]-disulfide + H2O = a ribonucleoside 5'-diphosphate + [thioredoxin]-dithiol. Provides the precursors necessary for DNA synthesis. Catalyzes the biosynthesis of deoxyribonucleotides from the corresponding ribonucleotides. This Bacillus pumilus (Bacillus mesentericus) protein is Ribonucleoside-diphosphate reductase subunit beta (bnrdF).